A 225-amino-acid polypeptide reads, in one-letter code: Uridylate kinase (225 aa).

9–10 (GS) provides a ligand contact to ATP. Glycine 44 contributes to the UMP binding site. ATP is bound by residues glycine 45 and arginine 49. UMP-binding positions include aspartate 66 and 114–120 (THPGHTT). ATP contacts are provided by threonine 140, asparagine 141, tyrosine 146, and aspartate 149.

Belongs to the UMP kinase family. Homohexamer.

Its subcellular location is the cytoplasm. It carries out the reaction UMP + ATP = UDP + ADP. It functions in the pathway pyrimidine metabolism; CTP biosynthesis via de novo pathway; UDP from UMP (UMPK route): step 1/1. With respect to regulation, inhibited by UTP. Functionally, catalyzes the reversible phosphorylation of UMP to UDP. The polypeptide is Uridylate kinase (Thermococcus gammatolerans (strain DSM 15229 / JCM 11827 / EJ3)).